The chain runs to 329 residues: Quinone oxidoreductase (329 aa).

A2 is modified (N-acetylalanine). The residue at position 23 (K23) is an N6-acetyllysine. NADP(+) is bound by residues Y53, S158 to V161, G181, H200, N229, V246 to R249, and V269 to L271. Position 248 is a phosphoserine (S248). Position 296 is an N6-succinyllysine (K296).

This sequence belongs to the zinc-containing alcohol dehydrogenase family. Quinone oxidoreductase subfamily. Homotetramer. Only very low amounts in the lens.

Its subcellular location is the cytoplasm. The catalysed reaction is 2 a quinone + NADPH + H(+) = 2 a 1,4-benzosemiquinone + NADP(+). In terms of biological role, does not have alcohol dehydrogenase activity. Binds NADP and acts through a one-electron transfer process. Orthoquinones, such as 1,2-naphthoquinone or 9,10-phenanthrenequinone, are the best substrates (in vitro). May act in the detoxification of xenobiotics. Interacts with (AU)-rich elements (ARE) in the 3'-UTR of target mRNA species. Enhances the stability of mRNA coding for BCL2. NADPH binding interferes with mRNA binding. In Homo sapiens (Human), this protein is Quinone oxidoreductase (CRYZ).